A 546-amino-acid chain; its full sequence is Probable ATP-dependent RNA helicase DDX56 (546 aa).

The Q motif motif lies at 7–35; that stretch reads LGFEHMGLDHRLLQAVTDLGWSRPTLIQE. In terms of domain architecture, Helicase ATP-binding spans 38–218; that stretch reads IPLALEGKDL…ELVLHNPVTL (181 aa). 51–58 provides a ligand contact to ATP; that stretch reads ARTGSGKT. Phosphoserine is present on S126. Phosphothreonine is present on T141. A DEAD box motif is present at residues 166–169; that stretch reads DEAD. A Helicase C-terminal domain is found at 230–424; the sequence is QLQQFQVVCE…PYQFHMEEIE (195 aa). Disordered stretches follow at residues 323–342 and 504–546; these read PVKG…SDPE and LVHP…AAPS. A compositionally biased stretch (basic residues) spans 505–524; sequence VHPHKKRKKPLASKKAKKAK. Position 531 is a phosphoserine (S531).

This sequence belongs to the DEAD box helicase family. DDX56/DBP9 subfamily. As to quaternary structure, may form homooligomeric complexes. Interacts with IRF3. Interacts with OCT4 and POU5F1.

It is found in the nucleus. The protein resides in the nucleolus. The catalysed reaction is ATP + H2O = ADP + phosphate + H(+). Functionally, nucleolar RNA helicase that plays a role in various biological processes including innate immunity, ribosome biogenesis or nucleolus organization. Plays an essential role in maintaining nucleolar integrity in planarian stem cells. Maintains embryonic stem cells proliferation by conventional regulation of ribosome assembly and interaction with OCT4 and POU5F1 complex. Regulates antiviral innate immunity by inhibiting the virus-triggered signaling nuclear translocation of IRF3. Mechanistically, acts by disrupting the interaction between IRF3 and importin IPO5. May play a role in later stages of the processing of the pre-ribosomal particles leading to mature 60S ribosomal subunits. Has intrinsic ATPase activity. The sequence is that of Probable ATP-dependent RNA helicase DDX56 (DDX56) from Bos taurus (Bovine).